Reading from the N-terminus, the 148-residue chain is Ribonuclease H (148 aa).

An RNase H type-1 domain is found at 1 to 142; that stretch reads MSDSVELYTD…ADQLANRGVD (142 aa). Residues aspartate 10, glutamate 48, aspartate 70, and aspartate 134 each coordinate Mg(2+). The segment at 129–148 is disordered; it reads GNERADQLANRGVDEVRAKR.

This sequence belongs to the RNase H family. As to quaternary structure, monomer. It depends on Mg(2+) as a cofactor.

The protein resides in the cytoplasm. The catalysed reaction is Endonucleolytic cleavage to 5'-phosphomonoester.. Endonuclease that specifically degrades the RNA of RNA-DNA hybrids. The protein is Ribonuclease H of Pseudomonas putida (strain W619).